A 323-amino-acid polypeptide reads, in one-letter code: Cyclin-H (323 aa).

Serine 5 carries the post-translational modification Phosphoserine; by CDK8. Phosphoserine is present on serine 132. The tract at residues 295 to 323 is disordered; the sequence is KGYEDDDYVSKKPKQEEEEWTDDDLVDSL. Serine 304 carries the phosphoserine; by CDK8 modification. A compositionally biased stretch (acidic residues) spans 310-323; the sequence is EEEEWTDDDLVDSL. Threonine 315 carries the post-translational modification Phosphothreonine. A Phosphoserine modification is found at serine 322.

This sequence belongs to the cyclin family. Cyclin C subfamily. Associates primarily with CDK7 and MAT1 to form the CAK complex. CAK can further associate with the core-TFIIH to form the TFIIH basal transcription factor. Expressed in both the germinal and somatic cells of the testis.

The protein localises to the nucleus. Regulates CDK7, the catalytic subunit of the CDK-activating kinase (CAK) enzymatic complex. CAK activates the cyclin-associated kinases CDK1, CDK2, CDK4 and CDK6 by threonine phosphorylation. CAK complexed to the core-TFIIH basal transcription factor activates RNA polymerase II by serine phosphorylation of the repetitive C-terminal domain (CTD) of its large subunit (POLR2A), allowing its escape from the promoter and elongation of the transcripts. Involved in cell cycle control and in RNA transcription by RNA polymerase II. Its expression and activity are constant throughout the cell cycle. This is Cyclin-H (Ccnh) from Mus musculus (Mouse).